The sequence spans 647 residues: DNA mismatch repair protein MutL (647 aa).

Disordered stretches follow at residues 356-391 (EGSQ…SSIS) and 407-428 (PRPQ…EALP). The segment covering 413-423 (LRPQYQGSVTS) has biased composition (polar residues).

The protein belongs to the DNA mismatch repair MutL/HexB family.

In terms of biological role, this protein is involved in the repair of mismatches in DNA. It is required for dam-dependent methyl-directed DNA mismatch repair. May act as a 'molecular matchmaker', a protein that promotes the formation of a stable complex between two or more DNA-binding proteins in an ATP-dependent manner without itself being part of a final effector complex. In Citrifermentans bemidjiense (strain ATCC BAA-1014 / DSM 16622 / JCM 12645 / Bem) (Geobacter bemidjiensis), this protein is DNA mismatch repair protein MutL.